The primary structure comprises 75 residues: Conotoxin VnMSGL-0111 (75 aa).

A signal peptide spans 1–20 (MSGLEIMVLTLLLLVSMATS). A propeptide spanning residues 21-44 (HQDGGEKQATQRDAINVRRRSITR) is cleaved from the precursor. 3 disulfide bridges follow: cysteine 48-cysteine 60, cysteine 52-cysteine 69, and cysteine 59-cysteine 73.

This sequence belongs to the conotoxin O3 superfamily. As to expression, expressed by the venom duct.

The protein resides in the secreted. This is Conotoxin VnMSGL-0111 from Conus ventricosus (Mediterranean cone).